The following is a 238-amino-acid chain: MSVAAYKRIMLKLSGEALMGDDSYGINEDVVSRIVAEIAEVNRLGVQVGVVIGGGNIFRGMKGAASGMDRATADYMGMLATVMNAMALADAFRRAQVEARVQSALRIDQVVEPYIRGRAIRHMEEGRVVIFAAGTGNPFFTTDTAAALRGSEMAAQIVLKATKVDGVYTADPKKDPQAQRYHRISFDEAIGRNLAVLDATAFALCRDQKLPINVFSIFKPGALKRVVLGEDEGTLVHS.

12-15 (KLSG) contributes to the ATP binding site. Glycine 54 serves as a coordination point for UMP. ATP-binding residues include glycine 55 and arginine 59. UMP-binding positions include aspartate 74 and 135-142 (TGNPFFTT). ATP contacts are provided by threonine 162, tyrosine 168, and aspartate 171.

The protein belongs to the UMP kinase family. As to quaternary structure, homohexamer.

Its subcellular location is the cytoplasm. The enzyme catalyses UMP + ATP = UDP + ADP. The protein operates within pyrimidine metabolism; CTP biosynthesis via de novo pathway; UDP from UMP (UMPK route): step 1/1. Inhibited by UTP. Its function is as follows. Catalyzes the reversible phosphorylation of UMP to UDP. The sequence is that of Uridylate kinase from Aromatoleum aromaticum (strain DSM 19018 / LMG 30748 / EbN1) (Azoarcus sp. (strain EbN1)).